Here is a 190-residue protein sequence, read N- to C-terminus: E3 ubiquitin-protein ligase RNF4 (190 aa).

A required for ubiquitination activity region spans residues 1–16 (MSTRKRRGGAINSRQA). A disordered region spans residues 1 to 29 (MSTRKRRGGAINSRQAQKRTREATSTPEI). The mediates interaction with TRPS1 stretch occupies residues 4–61 (RKRRGGAINSRQAQKRTREATSTPEISLEAEPIELVETAGDEIVDLTCESLEPVVVDL). Short sequence motifs (SUMO interaction motif) lie at residues 36 to 39 (IELV), 46 to 49 (IVDL), 57 to 59 (VVV), and 67 to 70 (VVIV). 2 positions are modified to phosphoserine: serine 94 and serine 95. The Zn(2+) site is built by cysteine 132, cysteine 135, cysteine 154, histidine 156, cysteine 159, cysteine 162, cysteine 173, and cysteine 176. The RING-type zinc-finger motif lies at 132–177 (CPICMDGYSEIVQNGRLIVSTECGHVFCSQCLRDSLKNANTCPTCR).

As to quaternary structure, homodimer (via RING-type zinc finger domain). Interacts with GSC2. Interacts with AR/the androgen receptor and TBP. Interacts with TCF20. Interacts with PATZ1. Interacts with TRPS1; negatively regulates TRPS1 transcriptional repressor activity. Interacts with PML (isoform PML-1, isoform PML-2, isoform PML-3, isoform PML-4, isoform PML-5 and isoform PML-6). Interacts with PRDM1/Blimp-1. Post-translationally, sumoylated; conjugated by one or two SUMO1 moieties. Autoubiquitinated. Widely expressed at low levels in many tissues; highly expressed in testis.

The protein localises to the cytoplasm. Its subcellular location is the nucleus. It localises to the PML body. The catalysed reaction is S-ubiquitinyl-[E2 ubiquitin-conjugating enzyme]-L-cysteine + [acceptor protein]-L-lysine = [E2 ubiquitin-conjugating enzyme]-L-cysteine + N(6)-ubiquitinyl-[acceptor protein]-L-lysine.. It participates in protein modification; protein ubiquitination. In terms of biological role, E3 ubiquitin-protein ligase which binds polysumoylated chains covalently attached to proteins and mediates 'Lys-6'-, 'Lys-11'-, 'Lys-48'- and 'Lys-63'-linked polyubiquitination of those substrates and their subsequent targeting to the proteasome for degradation. Regulates the degradation of several proteins including PML and the transcriptional activator PEA3. Involved in chromosome alignment and spindle assembly, it regulates the kinetochore CENPH-CENPI-CENPK complex by targeting polysumoylated CENPI to proteasomal degradation. Regulates the cellular responses to hypoxia and heat shock through degradation of respectively EPAS1 and PARP1. Alternatively, it may also bind DNA/nucleosomes and have a more direct role in the regulation of transcription for instance enhancing basal transcription and steroid receptor-mediated transcriptional activation. Catalyzes ubiquitination of sumoylated PARP1 in response to PARP1 trapping to chromatin, leading to PARP1 removal from chromatin by VCP/p97. The sequence is that of E3 ubiquitin-protein ligase RNF4 from Homo sapiens (Human).